A 208-amino-acid polypeptide reads, in one-letter code: Cell death-inducing p53-target protein 1 (208 aa).

Pro residues-rich tracts occupy residues 1 to 13 and 36 to 67; these read MSSE…PGGP and MQPP…PGFI. The disordered stretch occupies residues 1–71; the sequence is MSSEPPPPYP…PQPGFIPPHM (71 aa). The LITAF domain occupies 122-206; sequence ATTVTVLQGE…CKAYIYTYKR (85 aa). Zn(2+) contacts are provided by C142 and C145. The interval 164–184 is membrane-binding amphipathic helix; the sequence is LGFFCCFMGCDLGCCLIPCLI. Zn(2+) contacts are provided by C194 and C197.

This sequence belongs to the CDIP1/LITAF family. As to expression, highly expressed in brain. Expressed at lower level in heart, skeletal muscle, kidney, pancreas and liver. Weakly or not expressed in placenta and lung.

It is found in the late endosome membrane. The protein localises to the lysosome membrane. Acts as an important p53/TP53-apoptotic effector. Regulates TNF-alpha-mediated apoptosis in a p53/TP53-dependent manner. The sequence is that of Cell death-inducing p53-target protein 1 (CDIP1) from Homo sapiens (Human).